The chain runs to 128 residues: LIM domain-containing protein 2 (128 aa).

N-acetylmethionine is present on Met1. The tract at residues 1–25 is disordered; it reads MFQAAGAAQATPSHEAKGGGSSSTV. Residues 39-99 enclose the LIM zinc-binding domain; it reads ETCAACQKTV…KPHFQQLFKS (61 aa). Residues Cys41, Cys44, His62, Cys65, Cys68, Cys71, Cys89, and His92 each coordinate Zn(2+).

In terms of assembly, interacts with ILK.

The protein localises to the cytoplasm. Its subcellular location is the nucleus. Functionally, acts as an activator of the protein-kinase ILK, thereby regulating cell motility. The polypeptide is LIM domain-containing protein 2 (LIMD2) (Bos taurus (Bovine)).